The sequence spans 839 residues: Taste receptor type 1 member 2 (839 aa).

An N-terminal signal peptide occupies residues 1-19; sequence MRPRATTICSLFFLLRVLA. The Extracellular portion of the chain corresponds to 20 to 566; that stretch reads EPAKNSDFYL…AFLEWHEAPT (547 aa). N-linked (GlcNAc...) asparagine glycosylation is found at Asn-84, Asn-127, Asn-248, Asn-292, Asn-312, Asn-368, Asn-428, Asn-487, and Asn-527. The chain crosses the membrane as a helical span at residues 567 to 587; sequence IVVALLAALGFLSTLAILVIF. Residues 588–602 lie on the Cytoplasmic side of the membrane; that stretch reads WRHFQTPMVRSAGGP. A helical membrane pass occupies residues 603–623; sequence MCFLMLTLLLVAYMVVPVYVG. At 624–635 the chain is on the extracellular side; that stretch reads PPKVSTCFCRQA. Residues 636-656 form a helical membrane-spanning segment; sequence LFPLCFTICISCIAVRSFQIV. Topologically, residues 657–681 are cytoplasmic; the sequence is CVFKMASRFPRAYSYWVRYQGPYVS. A helical transmembrane segment spans residues 682–702; the sequence is MAFITVLKMVTVVIGMLATGL. The Extracellular portion of the chain corresponds to 703–727; the sequence is NPTTRIDPDDPKIMIVSCNPNYRNS. Residues 728-748 traverse the membrane as a helical segment; sequence LFFNTGLDLLLSVVGFSFAYM. The Cytoplasmic portion of the chain corresponds to 749–760; that stretch reads GKELPTNYNEAK. A helical transmembrane segment spans residues 761–781; that stretch reads FITLSMTFYFTSSVSLCTFMS. Residues 782-784 lie on the Extracellular side of the membrane; the sequence is AYN. A helical membrane pass occupies residues 785-805; the sequence is GVLVTIMDLLVTVLNLLAISL. At 806 to 839 the chain is on the cytoplasmic side; that stretch reads GYFGPKCYMILFYPERNTPAYFNSMIQGYTMRRD.

The protein belongs to the G-protein coupled receptor 3 family. TAS1R subfamily. As to quaternary structure, forms heterodimers with TAS1R3.

The protein localises to the cell membrane. Functionally, putative taste receptor. TAS1R2/TAS1R3 recognizes diverse natural and synthetic sweeteners. The chain is Taste receptor type 1 member 2 (TAS1R2) from Macaca mulatta (Rhesus macaque).